Here is a 166-residue protein sequence, read N- to C-terminus: Large ribosomal subunit protein uL10 (166 aa).

This sequence belongs to the universal ribosomal protein uL10 family. Part of the ribosomal stalk of the 50S ribosomal subunit. The N-terminus interacts with L11 and the large rRNA to form the base of the stalk. The C-terminus forms an elongated spine to which L12 dimers bind in a sequential fashion forming a multimeric L10(L12)X complex.

Forms part of the ribosomal stalk, playing a central role in the interaction of the ribosome with GTP-bound translation factors. The protein is Large ribosomal subunit protein uL10 of Listeria monocytogenes serotype 4b (strain CLIP80459).